The primary structure comprises 287 residues: Putative daunorubicin C-13 ketoreductase DnrU (287 aa).

Residue Gly-24 to Gly-30 coordinates NADP(+). Ser-149 lines the substrate pocket. Tyr-175 functions as the Proton acceptor in the catalytic mechanism.

The protein belongs to the short-chain dehydrogenases/reductases (SDR) family.

Could reduce the 13-carbonyl of daunorubicin to produce (13S)-13-dihydrodaunorubicin. Could also be able to reduce the 13-carbonyl of doxorubicin. This is Putative daunorubicin C-13 ketoreductase DnrU from Streptomyces sp. (strain C5).